A 105-amino-acid polypeptide reads, in one-letter code: Cuticle protein AM1159 (105 aa).

One can recognise a Chitin-binding type R&amp;R domain in the interval 16 to 81; sequence DGNFNYNFQT…PESPLLPVGP (66 aa). Positions 25-46 are disordered; that stretch reads TSNGIEDTKTGTPGSQGQSNMQ.

Arthrodial membrane.

In Cancer pagurus (Rock crab), this protein is Cuticle protein AM1159.